The following is a 159-amino-acid chain: 17 kDa surface antigen (159 aa).

The N-terminal stretch at 1–19 is a signal peptide; that stretch reads MKLLSKIMIIALAASMLQA. Cys20 is lipidated: N-palmitoyl cysteine. Residue Cys20 is the site of S-diacylglycerol cysteine attachment.

Belongs to the rickettsiale 17 kDa surface antigen family.

It localises to the cell outer membrane. This Rickettsia felis (strain ATCC VR-1525 / URRWXCal2) (Rickettsia azadi) protein is 17 kDa surface antigen (omp).